Here is a 471-residue protein sequence, read N- to C-terminus: Glutamate--tRNA ligase (471 aa).

The 'HIGH' region signature appears at 9–19 (PSPTGYLHVGG). The Zn(2+) site is built by cysteine 98, cysteine 100, cysteine 125, and aspartate 127. Positions 237-241 (KLSKR) match the 'KMSKS' region motif. Lysine 240 is a binding site for ATP.

It belongs to the class-I aminoacyl-tRNA synthetase family. Glutamate--tRNA ligase type 1 subfamily. Monomer. It depends on Zn(2+) as a cofactor.

The protein resides in the cytoplasm. It carries out the reaction tRNA(Glu) + L-glutamate + ATP = L-glutamyl-tRNA(Glu) + AMP + diphosphate. Functionally, catalyzes the attachment of glutamate to tRNA(Glu) in a two-step reaction: glutamate is first activated by ATP to form Glu-AMP and then transferred to the acceptor end of tRNA(Glu). This chain is Glutamate--tRNA ligase, found in Yersinia pestis.